The sequence spans 149 residues: D-aminoacyl-tRNA deacylase (149 aa).

The Gly-cisPro motif, important for rejection of L-amino acids motif lies at 137-138; sequence GP.

This sequence belongs to the DTD family. As to quaternary structure, homodimer.

The protein localises to the cytoplasm. It catalyses the reaction glycyl-tRNA(Ala) + H2O = tRNA(Ala) + glycine + H(+). The enzyme catalyses a D-aminoacyl-tRNA + H2O = a tRNA + a D-alpha-amino acid + H(+). In terms of biological role, an aminoacyl-tRNA editing enzyme that deacylates mischarged D-aminoacyl-tRNAs. Also deacylates mischarged glycyl-tRNA(Ala), protecting cells against glycine mischarging by AlaRS. Acts via tRNA-based rather than protein-based catalysis; rejects L-amino acids rather than detecting D-amino acids in the active site. By recycling D-aminoacyl-tRNA to D-amino acids and free tRNA molecules, this enzyme counteracts the toxicity associated with the formation of D-aminoacyl-tRNA entities in vivo and helps enforce protein L-homochirality. The chain is D-aminoacyl-tRNA deacylase from Syntrophus aciditrophicus (strain SB).